The sequence spans 164 residues: uncharacterized protein (164 aa).

The signal sequence occupies residues 1-22; the sequence is MKTNRSLVVIVSLITATLLLTA. A lipid anchor (N-palmitoyl cysteine) is attached at Cys-23. Residue Cys-23 is the site of S-diacylglycerol cysteine attachment.

It localises to the cell membrane. This is an uncharacterized protein from Escherichia coli (strain K12).